Consider the following 349-residue polypeptide: MDDNKSKALQAALSQIEKQFGKNTVMRLGDNTVQAVEAVSTGSLTLDIALGIGGLPKGRIVEIYGPESSGKTTMTLQAIAQCQKAGGTCAFIDAEHALDPQYARKLGVDIDNLLVSQPDHGEQALEIADMLVRSGAIDLIVVDSVAALTPKAEIEGEMGDSHMGLQARLMSQALRKITGNAKRSNCMVIFINQIRMKIGVMFGSPETTTGGNALKFYASVRLDIRRIGQVKEGDEIIGSETKVKVVKNKMAPPFREAIFQILYGKGVNQLGELVDLAVQQNIVQKAGAWYSYQGNKIGQGKNNVIRYLEENPQISTEIEAVIREQLLTKASDQTAAHDETEEEPDLLES.

Position 65–72 (65–72) interacts with ATP; it reads GPESSGKT. A disordered region spans residues 329–349; the sequence is KASDQTAAHDETEEEPDLLES. Residues 339 to 349 show a composition bias toward acidic residues; sequence ETEEEPDLLES.

Belongs to the RecA family.

It is found in the cytoplasm. Can catalyze the hydrolysis of ATP in the presence of single-stranded DNA, the ATP-dependent uptake of single-stranded DNA by duplex DNA, and the ATP-dependent hybridization of homologous single-stranded DNAs. It interacts with LexA causing its activation and leading to its autocatalytic cleavage. The protein is Protein RecA of Acinetobacter baylyi (strain ATCC 33305 / BD413 / ADP1).